The sequence spans 1040 residues: Multidrug resistance protein MdtB (1040 aa).

12 helical membrane-spanning segments follow: residues 16-36 (FIMRPVATTLLMVAILLAGII), 347-367 (LMMAITLVVMIIYLFLRNIPA), 369-389 (IIPGVAVPLSLIGTFAVMVFL), 396-416 (LTLMALTIATGFVVDDAIVVI), 440-460 (IGFTIISLTFSLIAVLIPLLF), 472-492 (FAITLAVAILISAVVSLTLTP), 537-557 (WLTLSVALSTLLLSVLLWVFI), 863-883 (LGSTVWLIVAAVVAMYIVLGI), 888-908 (FIHPITILSTLPTAGVGALLA), 911-931 (IAGSELDVIAIIGIILLIGIV), 968-988 (ILMTTLAALLGALPLMLSTGV), and 998-1018 (IGMVGGLIVSQVLTLFTTPVI).

The protein belongs to the resistance-nodulation-cell division (RND) (TC 2.A.6) family. MdtB subfamily. Part of a tripartite efflux system composed of MdtA, MdtB and MdtC. MdtB forms a heteromultimer with MdtC.

It localises to the cell inner membrane. Functionally, the MdtABC tripartite complex confers resistance against novobiocin and deoxycholate. The protein is Multidrug resistance protein MdtB of Escherichia coli O157:H7 (strain EC4115 / EHEC).